A 292-amino-acid chain; its full sequence is Elongation factor Ts (292 aa).

Positions 80–83 (TDFV) are involved in Mg(2+) ion dislocation from EF-Tu.

It belongs to the EF-Ts family.

The protein resides in the cytoplasm. Its function is as follows. Associates with the EF-Tu.GDP complex and induces the exchange of GDP to GTP. It remains bound to the aminoacyl-tRNA.EF-Tu.GTP complex up to the GTP hydrolysis stage on the ribosome. The sequence is that of Elongation factor Ts from Psychrobacter sp. (strain PRwf-1).